The sequence spans 271 residues: Zinc finger CCHC domain-containing protein 9 (271 aa).

The disordered stretch occupies residues 1–67 (MTRWARVTTS…RKKNKKKKEY (67 aa)). Over residues 7-20 (VTTSNSKRPLSATS) the composition is skewed to polar residues. The segment covering 22 to 33 (EDMKKGSVERAD) has biased composition (basic and acidic residues). Positions 35 to 46 (SLPNRKQCQSSR) are enriched in polar residues. Basic residues predominate over residues 56 to 65 (AKRKKNKKKK). 4 consecutive CCHC-type zinc fingers follow at residues 128–145 (MVCF…DCPA), 155–172 (GICY…KCRA), 184–201 (AKCF…SCPD), and 211–228 (GSCK…DCRE).

In terms of tissue distribution, detected in brain cortex and in testis.

It is found in the nucleus. It localises to the nucleolus. Functionally, may down-regulate transcription mediated by NF-kappa-B and the serum response element. In Mus musculus (Mouse), this protein is Zinc finger CCHC domain-containing protein 9 (Zcchc9).